A 176-amino-acid chain; its full sequence is HTH-type transcriptional regulator DctR (176 aa).

An HTH luxR-type domain is found at 109-174; the sequence is VPEADVSLSR…ELVRHQHINY (66 aa). A DNA-binding region (H-T-H motif) is located at residues 133 to 152; the sequence is TEDILEKLKISLKTFYCHKH.

Functionally, may act as a transcriptional regulator of dctA. This chain is HTH-type transcriptional regulator DctR (dctR), found in Escherichia coli O6:H1 (strain CFT073 / ATCC 700928 / UPEC).